Consider the following 370-residue polypeptide: Aminomethyltransferase (370 aa).

It belongs to the GcvT family. The glycine cleavage system is composed of four proteins: P, T, L and H.

It catalyses the reaction N(6)-[(R)-S(8)-aminomethyldihydrolipoyl]-L-lysyl-[protein] + (6S)-5,6,7,8-tetrahydrofolate = N(6)-[(R)-dihydrolipoyl]-L-lysyl-[protein] + (6R)-5,10-methylene-5,6,7,8-tetrahydrofolate + NH4(+). The glycine cleavage system catalyzes the degradation of glycine. This Prochlorococcus marinus (strain MIT 9215) protein is Aminomethyltransferase.